The sequence spans 93 residues: Small ribosomal subunit protein uS19 (93 aa).

This sequence belongs to the universal ribosomal protein uS19 family.

Its function is as follows. Protein S19 forms a complex with S13 that binds strongly to the 16S ribosomal RNA. This chain is Small ribosomal subunit protein uS19, found in Mycobacterium marinum (strain ATCC BAA-535 / M).